The following is a 430-amino-acid chain: Dihydrolipoyllysine-residue acetyltransferase component of pyruvate dehydrogenase complex (430 aa).

The 76-residue stretch at 2 to 77 (AFEFRLPDIG…VVGDVIVKID (76 aa)) folds into the Lipoyl-binding domain. Residue K43 is modified to N6-lipoyllysine. The tract at residues 80-122 (DAEDMQFKGHDDDSSSKEEPAKEEAPAEQAPVATQTEEVDENR) is disordered. Positions 84 to 104 (MQFKGHDDDSSSKEEPAKEEA) are enriched in basic and acidic residues. A Peripheral subunit-binding (PSBD) domain is found at 125-162 (KAMPSVRKYAREKGVNIKAVSGSGKNGRITKEDVDAYL). A disordered region spans residues 165 to 199 (GAPTASNESAASATNEEVAETPAAPAAVSLEGDFP). Over residues 168-192 (TASNESAASATNEEVAETPAAPAAV) the composition is skewed to low complexity. Residue H401 is part of the active site.

It belongs to the 2-oxoacid dehydrogenase family. Forms a 24-polypeptide structural core with octahedral symmetry. (R)-lipoate serves as cofactor.

The catalysed reaction is N(6)-[(R)-dihydrolipoyl]-L-lysyl-[protein] + acetyl-CoA = N(6)-[(R)-S(8)-acetyldihydrolipoyl]-L-lysyl-[protein] + CoA. Its function is as follows. The pyruvate dehydrogenase complex catalyzes the overall conversion of pyruvate to acetyl-CoA and CO(2). It contains multiple copies of three enzymatic components: pyruvate dehydrogenase (E1), dihydrolipoamide acetyltransferase (E2) and lipoamide dehydrogenase (E3). In Staphylococcus aureus (strain MRSA252), this protein is Dihydrolipoyllysine-residue acetyltransferase component of pyruvate dehydrogenase complex (pdhC).